The primary structure comprises 120 residues: Holo-[acyl-carrier-protein] synthase (120 aa).

Residues Asp-8 and Glu-58 each coordinate Mg(2+).

It belongs to the P-Pant transferase superfamily. AcpS family. The cofactor is Mg(2+).

It localises to the cytoplasm. The catalysed reaction is apo-[ACP] + CoA = holo-[ACP] + adenosine 3',5'-bisphosphate + H(+). Its function is as follows. Transfers the 4'-phosphopantetheine moiety from coenzyme A to a Ser of acyl-carrier-protein. This Streptococcus sanguinis (strain SK36) protein is Holo-[acyl-carrier-protein] synthase.